The following is a 52-amino-acid chain: Proteinase inhibitor PSI-1.2 (52 aa).

Cystine bridges form between C3-C32, C7-C28, C16-C38, and C31-C49.

In terms of biological role, potent inhibitor of trypsin and a weaker inhibitor of chymotrypsin. It does not inhibit elastase and subtilisin DY. The sequence is that of Proteinase inhibitor PSI-1.2 from Capsicum annuum (Capsicum pepper).